The chain runs to 139 residues: Proline-rich nuclear receptor coactivator 2 (139 aa).

Disordered stretches follow at residues 1–51, 61–80, and 89–110; these read MGGG…GYNS, NGGKNKNFPNNQSWNSSLSG, and ANQNYAGAKFSEPPSPSVLPKP. 2 stretches are compositionally biased toward polar residues: residues 11 to 36 and 61 to 79; these read APQSRNVSKNQQQLNRQKTKEQNSQM and NGGKNKNFPNNQSWNSSLS. The SH3-binding signature appears at 99–105; the sequence is SEPPSPS. Residues 101–110 show a composition bias toward pro residues; sequence PPSPSVLPKP.

The protein belongs to the PNRC family. PNRC2 subfamily. Interacts with UPF1/RENT1; preferentially interacts with hyperphosphorylated form. Interacts with DCP1A. Interacts with many nuclear receptors including ESR1, ESRRA, ESRRG, NR3C1/GR, NR5A1, PGR, TR, RAR and RXR. As to expression, expressed in heart, lung, muscle and brain.

Its subcellular location is the nucleus. It localises to the cytoplasm. The protein localises to the P-body. Its function is as follows. Involved in nonsense-mediated mRNA decay (NMD) by acting as a bridge between the mRNA decapping complex and the NMD machinery. May act by targeting the NMD machinery to the P-body and recruiting the decapping machinery to aberrant mRNAs. Required for UPF1/RENT1 localization to the P-body. Plays a role in glucocorticoid receptor-mediated mRNA degradation by interacting with the glucocorticoid receptor NR3C1 in a ligand-dependent manner when it is bound to the 5' UTR of target mRNAs and recruiting the RNA helicase UPF1 and the mRNA-decapping enzyme DCP1A, leading to RNA decay. Also acts as a nuclear receptor coactivator. May play a role in controlling the energy balance between energy storage and energy expenditure. This chain is Proline-rich nuclear receptor coactivator 2 (PNRC2), found in Homo sapiens (Human).